The chain runs to 299 residues: Ribonuclease Z (299 aa).

Zn(2+) contacts are provided by histidine 60, histidine 62, aspartate 64, histidine 65, histidine 137, aspartate 207, and histidine 265. Aspartate 64 acts as the Proton acceptor in catalysis.

This sequence belongs to the RNase Z family. As to quaternary structure, homodimer. Zn(2+) is required as a cofactor.

It carries out the reaction Endonucleolytic cleavage of RNA, removing extra 3' nucleotides from tRNA precursor, generating 3' termini of tRNAs. A 3'-hydroxy group is left at the tRNA terminus and a 5'-phosphoryl group is left at the trailer molecule.. Zinc phosphodiesterase, which displays some tRNA 3'-processing endonuclease activity. Probably involved in tRNA maturation, by removing a 3'-trailer from precursor tRNA. The polypeptide is Ribonuclease Z (Nitrosopumilus maritimus (strain SCM1)).